A 470-amino-acid chain; its full sequence is Monocarboxylate transporter 4 (470 aa).

The Cytoplasmic portion of the chain corresponds to 1–17 (MGGAVVDEGPTGIKAPD). A helical membrane pass occupies residues 18 to 38 (GGWGWAVLFGCFIITGFSYAF). The Extracellular segment spans residues 39–61 (PKAVSVFFKELMHEFGIGYSDTA). Residues 62-82 (WISSILLAMLYGTGPLCSVCV) traverse the membrane as a helical segment. The Cytoplasmic portion of the chain corresponds to 83–84 (NR). Residues 85 to 105 (FGCRPVMLVGGLFASLGMVAA) traverse the membrane as a helical segment. The Extracellular segment spans residues 106–109 (SFCR). A helical transmembrane segment spans residues 110–130 (SIIQIYLTTGVITGLGLALNF). Over 131-149 (QPSLIMLNRYFNKRRPIAN) the chain is Cytoplasmic. A helical membrane pass occupies residues 150-170 (GLAAAGSPVFLCALSPLGQLL). Over 171–179 (QDHYGWRGG) the chain is Extracellular. The chain crosses the membrane as a helical span at residues 180–200 (FLILGGLLLNCCVCAALMRPL). Residues 201 to 231 (VAPQVGGGTEPRGPQRPPQRLLDLSVFRDRG) lie on the Cytoplasmic side of the membrane. Residues 232-252 (FLIYAVAASIMVLGLFVPPVF) form a helical membrane-spanning segment. Over 253-267 (VVSYAKDMGVPDTKA) the chain is Extracellular. A helical membrane pass occupies residues 268-288 (AFLLTILGFIDIFARPTAGFI). At 289–298 (TGLKKVRPYS) the chain is on the cytoplasmic side. The chain crosses the membrane as a helical span at residues 299-319 (VYLFSFAMFFNGFTDLTGSTA). The Extracellular portion of the chain corresponds to 320 to 321 (TD). The chain crosses the membrane as a helical span at residues 322 to 342 (YGGLVVFCIFFGISYGMVGAL). Residues 343 to 355 (QFEVLMAIVGTQK) are Cytoplasmic-facing. The helical transmembrane segment at 356-376 (FSSAIGLVLLLEAVAVLIGPP) threads the bilayer. Residues 377 to 391 (SGGKLLDATKVYKYV) lie on the Extracellular side of the membrane. The chain crosses the membrane as a helical span at residues 392–412 (FILAGAEVLTSSLVLLLGNFF). Residues 413–470 (CIGKRKRPEVTEPEEVASEEKLHKPPVDVGVDSREVEHFLKAEPEKNGEVVHTPETSV) lie on the Cytoplasmic side of the membrane. Basolateral sorting signal regions lie at residues 429-446 (ASEEKLHKPPVDVGVDSR) and 446-470 (REVEHFLKAEPEKNGEVVHTPETSV). The residue at position 430 (Ser430) is a Phosphoserine. Thr465 carries the post-translational modification Phosphothreonine. Ser469 is subject to Phosphoserine.

Belongs to the major facilitator superfamily. Monocarboxylate porter (TC 2.A.1.13) family. As to quaternary structure, interacts with BSG; interaction mediates SLC16A3 targeting to the plasma membrane.

Its subcellular location is the cell membrane. The protein localises to the basolateral cell membrane. It catalyses the reaction (S)-lactate(in) + H(+)(in) = (S)-lactate(out) + H(+)(out). The catalysed reaction is pyruvate(out) + H(+)(out) = pyruvate(in) + H(+)(in). Its function is as follows. Proton-dependent transporter of monocarboxylates such as L-lactate and pyruvate. Plays a predominant role in the L-lactate efflux from highly glycolytic cells. In Mus musculus (Mouse), this protein is Monocarboxylate transporter 4 (Slc16a3).